The primary structure comprises 341 residues: MDLVNDLILRAARGEPTPRPPVWFMRQAGRYQKAYRKLRERYTLPEIVQNPEVCAEVTLLPVKALGVDAAILFADITTPLYGMGVDLSLVENKGPVIHNPVRDEKGVEALRPLVPEEAVPFVLETIRILKRELPVPLIGFAGAPFTLASYLVEGGPSRRFLRVKALMYGEEALWHRLMEKLTEAMARYLRAQAEAGADLLQVFDSWVGALSPADYRRYVKPHMERLFQSLRPAGVPVIHFGVGTMGLLEDMKEAGGDVLGLDHHTPLPWARALLGATPVQGNLDPAVLLAPKGVIRREVQRILKENGGKSGHIFNLGHGIVPETPEENVRYVVELIQEVAA.

Substrate-binding positions include 26-30 (RQAGR), Asp-75, Tyr-150, Ser-205, and His-318.

Belongs to the uroporphyrinogen decarboxylase family. In terms of assembly, homodimer.

It localises to the cytoplasm. The enzyme catalyses uroporphyrinogen III + 4 H(+) = coproporphyrinogen III + 4 CO2. Its pathway is porphyrin-containing compound metabolism; protoporphyrin-IX biosynthesis; coproporphyrinogen-III from 5-aminolevulinate: step 4/4. Functionally, catalyzes the decarboxylation of four acetate groups of uroporphyrinogen-III to yield coproporphyrinogen-III. In Thermus thermophilus (strain ATCC BAA-163 / DSM 7039 / HB27), this protein is Uroporphyrinogen decarboxylase.